Consider the following 122-residue polypeptide: Large ribosomal subunit protein uL14 (122 aa).

It belongs to the universal ribosomal protein uL14 family. As to quaternary structure, part of the 50S ribosomal subunit. Forms a cluster with proteins L3 and L19. In the 70S ribosome, L14 and L19 interact and together make contacts with the 16S rRNA in bridges B5 and B8.

Binds to 23S rRNA. Forms part of two intersubunit bridges in the 70S ribosome. The sequence is that of Large ribosomal subunit protein uL14 from Desulfotalea psychrophila (strain LSv54 / DSM 12343).